The chain runs to 421 residues: Putative transporter AmpG 3 (421 aa).

Helical transmembrane passes span Tyr6–Phe26, Ile41–Phe61, Trp80–Pro100, Leu104–Val124, Leu139–Val159, Ile166–Ile186, Leu230–Met250, Leu274–Phe294, Val297–Ile317, Phe324–Ile344, Ala360–Cys380, and Val388–Tyr408.

It belongs to the major facilitator superfamily.

Its subcellular location is the cell inner membrane. The polypeptide is Putative transporter AmpG 3 (ampG3) (Rickettsia prowazekii (strain Madrid E)).